Consider the following 417-residue polypeptide: Serine hydroxymethyltransferase (417 aa).

(6S)-5,6,7,8-tetrahydrofolate is bound by residues L121 and G125 to L127. Position 229 is an N6-(pyridoxal phosphate)lysine (K229). S355–F357 serves as a coordination point for (6S)-5,6,7,8-tetrahydrofolate.

This sequence belongs to the SHMT family. As to quaternary structure, homodimer. It depends on pyridoxal 5'-phosphate as a cofactor.

The protein localises to the cytoplasm. The enzyme catalyses (6R)-5,10-methylene-5,6,7,8-tetrahydrofolate + glycine + H2O = (6S)-5,6,7,8-tetrahydrofolate + L-serine. It functions in the pathway one-carbon metabolism; tetrahydrofolate interconversion. It participates in amino-acid biosynthesis; glycine biosynthesis; glycine from L-serine: step 1/1. In terms of biological role, catalyzes the reversible interconversion of serine and glycine with tetrahydrofolate (THF) serving as the one-carbon carrier. This reaction serves as the major source of one-carbon groups required for the biosynthesis of purines, thymidylate, methionine, and other important biomolecules. Also exhibits THF-independent aldolase activity toward beta-hydroxyamino acids, producing glycine and aldehydes, via a retro-aldol mechanism. This Salmonella schwarzengrund (strain CVM19633) protein is Serine hydroxymethyltransferase.